A 70-amino-acid polypeptide reads, in one-letter code: Small ribosomal subunit protein bS21 (70 aa).

It belongs to the bacterial ribosomal protein bS21 family.

The chain is Small ribosomal subunit protein bS21 from Bordetella avium (strain 197N).